The primary structure comprises 495 residues: MERDERPPSGGGGGGGSAGFLEPPAALPPPPRNGFCQDELAELDPGTNGETDSLTLGQGHIPVSVPDDRAEQRTCLICGDRATGLHYGIISCEGCKGFFKRSICNKRVYRCSRDKNCVMSRKQRNRCQYCRLLKCLQMGMNRKAIREDGMPGGRNKSIGPVQISEEEIERIMSGQEFEEEANHWSNHGDSDHSSPGNRASESNQPSPGSTLSSSRSVELNGFMAFRDQYMGMSVPPHYQYIPHLFSYSGHSPLLPPQARSLDPQSYSLIHQLMSAEDLEPLGTPMLIEDGYAVTQAELFALLCRLADELLFRQIAWIKKLPFFCELSIKDYTCLLSSTWQELILLSSLTVYSKQIFGELADVTAKYSPSDEELHRFSDEGMEVIERLIYLYHKFHQLKVSNEEYACMKAINFLNQDIRGLTSASQLEQLNKRYWYICQDFTEYKYTHQPNRFPDLMMCLPEIRYIAGKMVNVPLEQLPLLFKVVLHSCKTSTVKE.

Positions 1-34 (MERDERPPSGGGGGGGSAGFLEPPAALPPPPRNG) are disordered. The span at 9–18 (SGGGGGGGSA) shows a compositional bias: gly residues. The segment at residues 72–147 (QRTCLICGDR…MGMNRKAIRE (76 aa)) is a DNA-binding region (nuclear receptor). Positions 75, 78, 92, 95, 111, 117, 127, and 130 each coordinate Zn(2+). NR C4-type zinc fingers lie at residues 75 to 95 (CLICGDRATGLHYGIISCEGC) and 111 to 135 (CSRDKNCVMSRKQRNRCQYCRLLKC). Disordered regions lie at residues 145 to 165 (IREDGMPGGRNKSIGPVQISE) and 177 to 214 (FEEEANHWSNHGDSDHSSPGNRASESNQPSPGSTLSSS). Residues 180–192 (EANHWSNHGDSDH) show a composition bias toward basic and acidic residues. The interval 187-268 (HGDSDHSSPG…RSLDPQSYSL (82 aa)) is sufficient for interaction with UIMC1. The span at 202–214 (SNQPSPGSTLSSS) shows a compositional bias: low complexity. The region spanning 264–495 (QSYSLIHQLM…HSCKTSTVKE (232 aa)) is the NR LBD domain.

Belongs to the nuclear hormone receptor family. NR6 subfamily. In terms of assembly, homodimer. Interacts with UIMC1. As to expression, expressed in the germ cells of both the adult testis and ovary, being most abundant in spermatids.

It localises to the nucleus. Orphan nuclear receptor that binds to a response element containing the sequence 5'-TCAAGGTCA-3'. Acts as a regulator of embryonic stem cell pluripotency by mediating repression of POU5F1/OCT4: binds to the DR0 element within the POU5F1/OCT4 promoter and inhibits POU5F1/OCT4 expression during embryonic stem cell differentiation. Required to restrict POU5F1/OCT4 expression to the germ cell lineage. Involved in the regulation of gene expression in germ cell development during gametogenesis. In Mus musculus (Mouse), this protein is Nuclear receptor subfamily 6 group A member 1 (Nr6a1).